The primary structure comprises 380 residues: 3-dehydroquinate synthase (380 aa).

The protein belongs to the archaeal-type DHQ synthase family.

It carries out the reaction 2-amino-2,3,7-trideoxy-D-lyxo-hept-6-ulosonate + NAD(+) + H2O = 3-dehydroquinate + NH4(+) + NADH + H(+). Its function is as follows. Catalyzes the oxidative deamination and cyclization of 2-amino-3,7-dideoxy-D-threo-hept-6-ulosonic acid (ADH) to yield 3-dehydroquinate (DHQ), which is fed into the canonical shikimic pathway of aromatic amino acid biosynthesis. The protein is 3-dehydroquinate synthase of Methanosarcina mazei (strain ATCC BAA-159 / DSM 3647 / Goe1 / Go1 / JCM 11833 / OCM 88) (Methanosarcina frisia).